The following is a 479-amino-acid chain: NADH dehydrogenase [ubiquinone] flavoprotein 1, mitochondrial (479 aa).

103–112 (GRGGAGFPSG) lines the NADH pocket. An FMN-binding site is contributed by 216–264 (RGAGAYICGEETALIESIEGKQGKPRLKPPFPAMAGLYGCPTTVTNVET). Positions 396, 399, 402, and 442 each coordinate [4Fe-4S] cluster.

This sequence belongs to the complex I 51 kDa subunit family. In terms of assembly, complex I is composed of about 45 different subunits. This is a component of the flavoprotein-sulfur (FP) fragment of the enzyme. It depends on FMN as a cofactor. [4Fe-4S] cluster serves as cofactor.

It is found in the mitochondrion inner membrane. The enzyme catalyses a ubiquinone + NADH + 5 H(+)(in) = a ubiquinol + NAD(+) + 4 H(+)(out). Core subunit of the mitochondrial membrane respiratory chain NADH dehydrogenase (Complex I) that is believed to belong to the minimal assembly required for catalysis. Complex I functions in the transfer of electrons from NADH to the respiratory chain. The immediate electron acceptor for the enzyme is believed to be ubiquinone. This Dictyostelium discoideum (Social amoeba) protein is NADH dehydrogenase [ubiquinone] flavoprotein 1, mitochondrial (ndufv1).